Consider the following 385-residue polypeptide: Leucine aminopeptidase 1 (385 aa).

The first 19 residues, Met-1–Ala-19, serve as a signal peptide directing secretion. Positions Ala-20–Val-87 are excised as a propeptide. Asn-177 carries an N-linked (GlcNAc...) asparagine glycan. Zn(2+) is bound by residues His-185, Asp-204, Glu-243, and Asp-270. A disulfide bridge links Cys-319 with Cys-323. His-352 contributes to the Zn(2+) binding site.

It belongs to the peptidase M28 family. M28E subfamily. Monomer. Zn(2+) serves as cofactor.

The protein localises to the secreted. Functionally, extracellular aminopeptidase that allows assimilation of proteinaceous substrates. The chain is Leucine aminopeptidase 1 (LAP1) from Ajellomyces capsulatus (strain H88) (Darling's disease fungus).